Here is an 83-residue protein sequence, read N- to C-terminus: Transmembrane protein EP84R (83 aa).

The next 2 helical transmembrane spans lie at 31-51 and 59-79; these read VIGI…IIIL and AGSV…FLIY.

It belongs to the asfivirus EP84R family.

It is found in the virion membrane. The polypeptide is Transmembrane protein EP84R (Ornithodoros (relapsing fever ticks)).